A 155-amino-acid chain; its full sequence is Transcriptional repressor NrdR (155 aa).

The segment at 3–34 (CPFCGHSSTQVLDSRVSEDGDTVRRRRRCEAC) is a zinc-finger region. In terms of domain architecture, ATP-cone spans 49–139 (PAIVKKNGSR…VYRSFEDVSE (91 aa)).

This sequence belongs to the NrdR family. Requires Zn(2+) as cofactor.

In terms of biological role, negatively regulates transcription of bacterial ribonucleotide reductase nrd genes and operons by binding to NrdR-boxes. This is Transcriptional repressor NrdR from Cupriavidus metallidurans (strain ATCC 43123 / DSM 2839 / NBRC 102507 / CH34) (Ralstonia metallidurans).